The chain runs to 309 residues: NAD kinase (309 aa).

The Proton acceptor role is filled by aspartate 89. NAD(+)-binding positions include 89 to 90, 163 to 164, histidine 174, arginine 191, aspartate 193, and 204 to 209; these read DG, NE, and TAYALS.

It belongs to the NAD kinase family. The cofactor is a divalent metal cation.

Its subcellular location is the cytoplasm. The catalysed reaction is NAD(+) + ATP = ADP + NADP(+) + H(+). In terms of biological role, involved in the regulation of the intracellular balance of NAD and NADP, and is a key enzyme in the biosynthesis of NADP. Catalyzes specifically the phosphorylation on 2'-hydroxyl of the adenosine moiety of NAD to yield NADP. This chain is NAD kinase, found in Shewanella baltica (strain OS185).